A 257-amino-acid chain; its full sequence is Adenylate kinase (257 aa).

52-57 contributes to the ATP binding site; that stretch reads GAGKGT. The interval 72–101 is NMP; it reads ATGDMLRSQVAKKTELGKEAKKIMDQGGLV. Residues Thr73, Arg78, 99–101, 128–131, and Gln135 contribute to the AMP site; these read GLV and GFPR. The LID stretch occupies residues 169-206; that stretch reads GRLVHPASGRSYHKIFNPPKNDMKDDVTGEPLIQRSDD. ATP-binding positions include Arg170 and 179–180; that span reads SY. AMP contacts are provided by Arg203 and Arg214. Gln242 serves as a coordination point for ATP.

The protein belongs to the adenylate kinase family. AK2 subfamily. In terms of assembly, monomer.

The protein resides in the cytoplasm. Its subcellular location is the cytosol. It localises to the mitochondrion intermembrane space. It catalyses the reaction AMP + ATP = 2 ADP. In terms of biological role, catalyzes the reversible transfer of the terminal phosphate group between ATP and AMP. Plays an important role in cellular energy homeostasis and in adenine nucleotide metabolism. Adenylate kinase activity is critical for regulation of the phosphate utilization and the AMP de novo biosynthesis pathways. The protein is Adenylate kinase (adk1) of Aspergillus fumigatus (strain CBS 144.89 / FGSC A1163 / CEA10) (Neosartorya fumigata).